The following is a 355-amino-acid chain: Guanine nucleotide-binding protein alpha-2 subunit (355 aa).

Positions 1-20 (MCFGGRGKDDEAEASRSREL) are disordered. One can recognise a G-alpha domain in the interval 33-355 (KEVKLLLLGA…IQRNLKQLIL (323 aa)). Residues 36-49 (KLLLLGAGESGKST) are G1 motif. Glutamate 44, serine 45, glycine 46, lysine 47, serine 48, threonine 49, aspartate 151, leucine 176, threonine 182, glycine 204, asparagine 270, lysine 271, aspartate 273, and alanine 328 together coordinate GTP. Serine 48 is a binding site for Mg(2+). The G2 motif stretch occupies residues 174 to 182 (DLLRSRLRT). Residue threonine 182 coordinates Mg(2+). The segment at 197–206 (YRMFDVGGQR) is G3 motif. The G4 motif stretch occupies residues 266–273 (ILFLNKID). Positions 326–331 (TNATDT) are G5 motif.

It belongs to the G-alpha family. G(q) subfamily. As to quaternary structure, g proteins are composed of 3 units; alpha, beta and gamma. The alpha chain contains the guanine nucleotide binding site. Requires Mg(2+) as cofactor.

Functionally, guanine nucleotide-binding proteins (G proteins) are involved as modulators or transducers in various transmembrane signaling systems. The polypeptide is Guanine nucleotide-binding protein alpha-2 subunit (gna-2) (Neurospora crassa (strain ATCC 24698 / 74-OR23-1A / CBS 708.71 / DSM 1257 / FGSC 987)).